The sequence spans 307 residues: Putative serpin A13 (307 aa).

The N-terminal stretch at 1-21 (MEASRWWLLVTVLMAGAHCVA) is a signal peptide. Asparagine 150 and asparagine 250 each carry an N-linked (GlcNAc...) asparagine glycan.

Belongs to the serpin family.

The protein localises to the secreted. The polypeptide is Putative serpin A13 (SERPINA13P) (Homo sapiens (Human)).